Consider the following 447-residue polypeptide: Tubulin beta chain (447 aa).

GTP contacts are provided by Q11, E69, S138, G142, T143, G144, N204, and N226. E69 is a Mg(2+) binding site.

Belongs to the tubulin family. In terms of assembly, dimer of alpha and beta chains. A typical microtubule is a hollow water-filled tube with an outer diameter of 25 nm and an inner diameter of 15 nM. Alpha-beta heterodimers associate head-to-tail to form protofilaments running lengthwise along the microtubule wall with the beta-tubulin subunit facing the microtubule plus end conferring a structural polarity. Microtubules usually have 13 protofilaments but different protofilament numbers can be found in some organisms and specialized cells. Requires Mg(2+) as cofactor.

Its subcellular location is the cytoplasm. The protein localises to the cytoskeleton. Tubulin is the major constituent of microtubules, a cylinder consisting of laterally associated linear protofilaments composed of alpha- and beta-tubulin heterodimers. Microtubules grow by the addition of GTP-tubulin dimers to the microtubule end, where a stabilizing cap forms. Below the cap, tubulin dimers are in GDP-bound state, owing to GTPase activity of alpha-tubulin. This chain is Tubulin beta chain, found in Trichophyton rubrum (Athlete's foot fungus).